We begin with the raw amino-acid sequence, 137 residues long: Large ribosomal subunit protein uL16 (137 aa).

Positions 1 to 17 (MLQPKRTKFRKTHKGRN) are enriched in basic residues. Residues 1–23 (MLQPKRTKFRKTHKGRNRGLAQN) form a disordered region.

Belongs to the universal ribosomal protein uL16 family. Part of the 50S ribosomal subunit.

In terms of biological role, binds 23S rRNA and is also seen to make contacts with the A and possibly P site tRNAs. This Pseudoalteromonas translucida (strain TAC 125) protein is Large ribosomal subunit protein uL16.